Reading from the N-terminus, the 808-residue chain is Sucrose synthase 2 (808 aa).

Ser-10 carries the post-translational modification Phosphoserine; by CPK. Positions 272–749 (MMFNVVILSP…GLQRIYEKYT (478 aa)) are GT-B glycosyltransferase.

The protein belongs to the glycosyltransferase 1 family. Plant sucrose synthase subfamily. In terms of assembly, homotetramer or heterotetramer with SUS1. In terms of processing, phosphorylated at Ser-10 by CPK23 in developing seeds. Predominantly expressed in the leaf tissues. Expressed in seeds, and at lower levels in roots. Expressed in leaf mesophyll and phloem (at protein level).

The enzyme catalyses an NDP-alpha-D-glucose + D-fructose = a ribonucleoside 5'-diphosphate + sucrose + H(+). Its activity is regulated as follows. Activated by phosphorylation at Ser-10 by CPK23. Functionally, sucrose-cleaving enzyme that provides UDP-glucose and fructose for various metabolic pathways. Functions in developing seeds by supplying substrates for the biosynthesis of storage products. This is Sucrose synthase 2 (SUS2) from Oryza sativa subsp. japonica (Rice).